A 603-amino-acid polypeptide reads, in one-letter code: Adenine deaminase (603 aa).

The protein belongs to the metallo-dependent hydrolases superfamily. Adenine deaminase family. Mn(2+) serves as cofactor.

It carries out the reaction adenine + H2O + H(+) = hypoxanthine + NH4(+). This chain is Adenine deaminase, found in Ruegeria pomeroyi (strain ATCC 700808 / DSM 15171 / DSS-3) (Silicibacter pomeroyi).